The following is a 94-amino-acid chain: MKLAILSLFLVFQIGVESKKNGFALDHYGKPWECNLFNVFGPYCNNQCTENKARKGYCCTFTCYCFDLPDDAKILEIGDSRKNYCDVSLTDVLG.

A signal peptide spans 1–18; the sequence is MKLAILSLFLVFQIGVES. One can recognise an LCN-type CS-alpha/beta domain in the interval 20 to 86; sequence KNGFALDHYG…IGDSRKNYCD (67 aa). 4 disulfides stabilise this stretch: Cys-34–Cys-85, Cys-44–Cys-63, Cys-48–Cys-65, and Cys-59–Cys-85.

It belongs to the long (4 C-C) scorpion toxin superfamily. Sodium channel inhibitor family. Beta subfamily. As to expression, expressed by the venom gland.

It is found in the secreted. Functionally, binds voltage-independently at site-4 of sodium channels (Nav) and shift the voltage of activation toward more negative potentials thereby affecting sodium channel activation and promoting spontaneous and repetitive firing. The chain is Neurotoxin LmNaTx45.2 from Lychas mucronatus (Chinese swimming scorpion).